Consider the following 726-residue polypeptide: Biotin--protein ligase (726 aa).

A disordered region spans residues 28 to 98 (EVKDQVSNKQ…SDRGGGPVEH (71 aa)). A compositionally biased stretch (basic and acidic residues) spans 43–75 (PKPEPSLEIKPEQDGMEHVGRDDPKALGEEPKQ). A phosphoserine mark is found at Ser-147 and Ser-299. Residues 463–652 (KQLGKVILFA…VLEKLIKEFQ (190 aa)) enclose the BPL/LPL catalytic domain.

Belongs to the biotin--protein ligase family. In terms of assembly, monomer. Widely expressed. Mostly expressed in muscle, placenta and to a lower extent in the brain, kidney, pancreas, liver and lung.

It is found in the cytoplasm. It localises to the mitochondrion. The enzyme catalyses apo-[methylmalonyl-CoA:pyruvate carboxytransferase] + biotin + ATP = holo-[methylmalonyl-CoA:pyruvate carboxytransferase] + AMP + diphosphate + H(+). It catalyses the reaction apo-[propionyl-CoA:carbon-dioxide ligase (ADP-forming)] + biotin + ATP = holo-[propionyl-CoA:carbon-dioxide ligase (ADP-forming)] + AMP + diphosphate + H(+). The catalysed reaction is apo-[3-methylcrotonoyl-CoA:carbon-dioxide ligase (ADP-forming)] + biotin + ATP = holo-[3-methylcrotonoyl-CoA:carbon-dioxide ligase (ADP-forming)] + AMP + diphosphate + H(+). It carries out the reaction biotin + L-lysyl-[protein] + ATP = N(6)-biotinyl-L-lysyl-[protein] + AMP + diphosphate + H(+). Its function is as follows. Biotin--protein ligase catalyzing the biotinylation of the 4 biotin-dependent carboxylases acetyl-CoA-carboxylase, pyruvate carboxylase, propionyl-CoA carboxylase, and methylcrotonyl-CoA carboxylase. This is Biotin--protein ligase from Homo sapiens (Human).